A 398-amino-acid chain; its full sequence is 1-deoxy-D-xylulose 5-phosphate reductoisomerase (398 aa).

Residues Thr10, Gly11, Ser12, Ile13, Asn38, and Asn124 each contribute to the NADPH site. Position 125 (Lys125) interacts with 1-deoxy-D-xylulose 5-phosphate. Glu126 lines the NADPH pocket. Position 150 (Asp150) interacts with Mn(2+). Positions 151, 152, 186, and 209 each coordinate 1-deoxy-D-xylulose 5-phosphate. Residue Glu152 participates in Mn(2+) binding. Gly215 contributes to the NADPH binding site. Residues Ser222, Asn227, Lys228, and Glu231 each coordinate 1-deoxy-D-xylulose 5-phosphate. Mn(2+) is bound at residue Glu231.

Belongs to the DXR family. Requires Mg(2+) as cofactor. Mn(2+) is required as a cofactor.

It catalyses the reaction 2-C-methyl-D-erythritol 4-phosphate + NADP(+) = 1-deoxy-D-xylulose 5-phosphate + NADPH + H(+). Its pathway is isoprenoid biosynthesis; isopentenyl diphosphate biosynthesis via DXP pathway; isopentenyl diphosphate from 1-deoxy-D-xylulose 5-phosphate: step 1/6. In terms of biological role, catalyzes the NADPH-dependent rearrangement and reduction of 1-deoxy-D-xylulose-5-phosphate (DXP) to 2-C-methyl-D-erythritol 4-phosphate (MEP). In Baumannia cicadellinicola subsp. Homalodisca coagulata, this protein is 1-deoxy-D-xylulose 5-phosphate reductoisomerase.